We begin with the raw amino-acid sequence, 95 residues long: Large ribosomal subunit protein bL27 (95 aa).

The segment at methionine 1–lysine 24 is disordered. The segment covering threonine 7–arginine 20 has biased composition (polar residues).

This sequence belongs to the bacterial ribosomal protein bL27 family.

The chain is Large ribosomal subunit protein bL27 from Trichodesmium erythraeum (strain IMS101).